Reading from the N-terminus, the 125-residue chain is Photoactive yellow protein (125 aa).

Positions 23–86 constitute a PAS domain; the sequence is LDGLAFGAIQ…GKFKEGVASG (64 aa). At Cys-69 the chain carries S-(4-hydroxycinnamyl)cysteine.

Belongs to the photoactive yellow protein family. Monomer. Post-translationally, the 4-hydroxycinnamic acid (p-coumaric acid) chromophore is covalently bound via a thioester linkage.

In terms of biological role, photoactive blue light protein. Probably functions as a photoreceptor for a negative phototaxis response. This Halorhodospira halophila (Ectothiorhodospira halophila) protein is Photoactive yellow protein (pyp).